Reading from the N-terminus, the 734-residue chain is Photosystem I P700 chlorophyll a apoprotein A2 (734 aa).

Transmembrane regions (helical) follow at residues 46-69, 135-158, 175-199, 273-291, 330-353, 369-395, 417-439, and 517-535; these read IFAS…FHVA, LYTG…LHLQ, LNHH…HVAI, IAHH…GHMY, IHFQ…QHMY, AALY…IFFI, AIKS…LYVH, and FLVH…LILV. Positions 559 and 568 each coordinate [4Fe-4S] cluster. 2 helical membrane passes run 575 to 596 and 643 to 665; these read AFYL…YWHW and LSVW…MFLI. The chlorophyll a site is built by histidine 654, methionine 662, and tyrosine 670. Position 671 (tryptophan 671) interacts with phylloquinone. The chain crosses the membrane as a helical span at residues 707 to 727; it reads LVGLAHFSVGYIFTYAAFLIA.

The protein belongs to the PsaA/PsaB family. The PsaA/B heterodimer binds the P700 chlorophyll special pair and subsequent electron acceptors. PSI consists of a core antenna complex that captures photons, and an electron transfer chain that converts photonic excitation into a charge separation. The eukaryotic PSI reaction center is composed of at least 11 subunits. P700 is a chlorophyll a/chlorophyll a' dimer, A0 is one or more chlorophyll a, A1 is one or both phylloquinones and FX is a shared 4Fe-4S iron-sulfur center. is required as a cofactor.

It localises to the plastid. The protein localises to the chloroplast thylakoid membrane. The catalysed reaction is reduced [plastocyanin] + hnu + oxidized [2Fe-2S]-[ferredoxin] = oxidized [plastocyanin] + reduced [2Fe-2S]-[ferredoxin]. In terms of biological role, psaA and PsaB bind P700, the primary electron donor of photosystem I (PSI), as well as the electron acceptors A0, A1 and FX. PSI is a plastocyanin-ferredoxin oxidoreductase, converting photonic excitation into a charge separation, which transfers an electron from the donor P700 chlorophyll pair to the spectroscopically characterized acceptors A0, A1, FX, FA and FB in turn. Oxidized P700 is reduced on the lumenal side of the thylakoid membrane by plastocyanin. This chain is Photosystem I P700 chlorophyll a apoprotein A2, found in Drimys granadensis.